Reading from the N-terminus, the 106-residue chain is Immunoglobulin lambda constant 1 (106 aa).

One can recognise an Ig-like domain in the interval 7–101 (PTVTLFPPSS…EGSTVEKTVA (95 aa)). A disulfide bond links Cys28 and Cys87.

As to quaternary structure, immunoglobulins are composed of two identical heavy chains and two identical light chains; disulfide-linked.

It localises to the secreted. The protein resides in the cell membrane. Its function is as follows. Constant region of immunoglobulin light chains. Immunoglobulins, also known as antibodies, are membrane-bound or secreted glycoproteins produced by B lymphocytes. In the recognition phase of humoral immunity, the membrane-bound immunoglobulins serve as receptors which, upon binding of a specific antigen, trigger the clonal expansion and differentiation of B lymphocytes into immunoglobulins-secreting plasma cells. Secreted immunoglobulins mediate the effector phase of humoral immunity, which results in the elimination of bound antigens. The antigen binding site is formed by the variable domain of one heavy chain, together with that of its associated light chain. Thus, each immunoglobulin has two antigen binding sites with remarkable affinity for a particular antigen. The variable domains are assembled by a process called V-(D)-J rearrangement and can then be subjected to somatic hypermutations which, after exposure to antigen and selection, allow affinity maturation for a particular antigen. The chain is Immunoglobulin lambda constant 1 from Homo sapiens (Human).